A 1013-amino-acid chain; its full sequence is PHD finger protein 20-like protein 1 (1013 aa).

The Tudor 1 domain maps to 11 to 71 (ITFEIGARLE…SNRLRPLERP (61 aa)). Residues Lys-75 and Lys-79 each participate in a glycyl lysine isopeptide (Lys-Gly) (interchain with G-Cter in SUMO2) cross-link. One can recognise a Tudor 2 domain in the interval 85-141 (FDFKAGEEVLARWTDCRYYPAKIEAINKEGTFTVQFYDGVIRCLKRMHIKAMPEDAK). Disordered regions lie at residues 183 to 206 (AKNK…RDGG), 309 to 368 (EQAI…TPKS), 389 to 454 (VINK…QSSV), and 482 to 511 (VTGS…FANP). Polar residues predominate over residues 315-346 (KPQSQKKNEAVISSSANTQKPALLSSTLSSGK). The residue at position 368 (Ser-368) is a Phosphoserine. Residues 404–415 (PCKHSERRRRSQ) show a composition bias toward basic residues. Ser-432 carries the phosphoserine modification. Residues 443 to 453 (SISSQNQQQSS) are compositionally biased toward low complexity. The span at 496–505 (ECPREEKEET) shows a compositional bias: basic and acidic residues. Lys-530 participates in a covalent cross-link: Glycyl lysine isopeptide (Lys-Gly) (interchain with G-Cter in SUMO2). A compositionally biased stretch (basic and acidic residues) spans 533-565 (KKVKLEEKTSTAFGKRKEKDKEKKEKRDKDHYK). The interval 533–585 (KKVKLEEKTSTAFGKRKEKDKEKKEKRDKDHYKPKQKKKKKKKKKSKQHDYSD) is disordered. The segment covering 566–579 (PKQKKKKKKKKKSK) has biased composition (basic residues). The PHD-type zinc finger occupies 681–729 (IVRCICELDEENGFMIQCEECLCWQHSVCMGLLEDSIPEQYICYICRDP). Basic and acidic residues predominate over residues 824 to 852 (RKITPQDRANSEGKECVQNHKEPALRMEE). Positions 824-911 (RKITPQDRAN…LLYKNRGVSE (88 aa)) are disordered. The segment covering 854 to 878 (YITSEHSYQKPQSFSQDCQSLTDPG) has biased composition (polar residues). Residues 879 to 892 (SSDDDDASSFEEDG) are compositionally biased toward acidic residues. Position 905 is an N6-acetyllysine (Lys-905).

As to quaternary structure, interacts with methylated DNMT1 (DNMT1K142me1). Interacts with SOX2.

It localises to the nucleus. Is a negative regulator of proteasomal degradation of a set of methylated proteins, including DNMT1 and SOX2. Involved in the maintainance of embryonic stem cells pluripotency, through the regulation of SOX2 levels. This Mus musculus (Mouse) protein is PHD finger protein 20-like protein 1 (Phf20l1).